The sequence spans 95 residues: RING finger protein Z (95 aa).

Gly2 is lipidated: N-myristoyl glycine; by host. The RING-type; atypical zinc finger occupies 38–74 (CKSCWFANRGLIACSDHYLCLNCLTRLRSQSQFCGIC). A PTAP/PSAP motif motif is present at residues 88–91 (PSAP).

This sequence belongs to the arenaviridae Z protein family. As to quaternary structure, interacts with protein NP; this interaction probably directs the encapsidated genome to budding sites. Interacts (via RING domain) with polymerase L; this interaction inhibits viral transcription and replication, Z partially blocks the product exit tunnel for the releasing nascent RNA product. Interacts with the glycoprotein complex; this interaction plays a role in virion budding. Interacts with host eIF4E; this interaction results in eIF4E reduced affinity for its substrate, the 5'-m7 G cap structure. Interacts (via late-budding domain) with host TSG101; this interaction is essential for budding and release of viral particles. Interacts with host RPLP0; this interaction may serve to load ribosome-like particles inside the virion. Interacts with host PML; this interaction induces PML bodies redistribution in the cytoplasm upon viral infection. Post-translationally, myristoylation is required for the role of RING finger protein Z in assembly and budding.

It localises to the virion. The protein resides in the host cytoplasm. It is found in the host perinuclear region. Its subcellular location is the host cell membrane. Its function is as follows. Plays a crucial role in virion assembly and budding. Expressed late in the virus life cycle, it acts as an inhibitor of viral transcription and RNA synthesis by interacting with the viral polymerase L. Presumably recruits the NP encapsidated genome to cellular membranes at budding sites via direct interaction with NP. Plays critical roles in the final steps of viral release by interacting with host TSG101, a member of the vacuolar protein-sorting pathway and using other cellular host proteins involved in vesicle formation pathway. The budding of the virus progeny occurs after association of protein Z with the viral glycoprotein complex SSP-GP1-GP2 at the cell periphery, step that requires myristoylation of protein Z. Also selectively represses protein production by associating with host eIF4E. In cell-based minigenome assay, has an inhibitory effect on the ribonucleoprotein machinery (vRNP), which is responsible for the replication and transcription of the viral genome. This is RING finger protein Z from Pirital mammarenavirus (isolate Rat/Venezuela/VAV-488/1995) (PIRV).